The following is a 308-amino-acid chain: NAD-dependent protein deacylase SIR4 (308 aa).

A mitochondrion-targeting transit peptide spans 1–16 (MAATKLHPALRNAIRA). The Deacetylase sirtuin-type domain occupies 28 to 308 (TFDVQEGIKL…EVLPAALRQL (281 aa)). Residues 53 to 73 (GAGI…RPPH) and 129 to 132 (QNVD) each bind NAD(+). Histidine 147 functions as the Proton acceptor in the catalytic mechanism. Residues cysteine 155, cysteine 158, cysteine 211, and cysteine 214 each contribute to the Zn(2+) site. NAD(+)-binding positions include 251-253 (GTS), 277-279 (NSG), and isoleucine 297.

This sequence belongs to the sirtuin family. Class II subfamily. Zn(2+) is required as a cofactor.

The protein localises to the mitochondrion matrix. It catalyses the reaction N(6)-acetyl-L-lysyl-[protein] + NAD(+) + H2O = 2''-O-acetyl-ADP-D-ribose + nicotinamide + L-lysyl-[protein]. Its function is as follows. NAD-dependent protein deacylase. Catalyzes the NAD-dependent hydrolysis of acyl groups from lysine residues. The sequence is that of NAD-dependent protein deacylase SIR4 from Monosiga brevicollis (Choanoflagellate).